The chain runs to 505 residues: Peroxisome proliferator-activated receptor gamma (505 aa).

Thr84 carries O-linked (GlcNAc) threonine glycosylation. A Phosphoserine; by MAPK modification is found at Ser112. The segment at residues 136–210 (AIECRVCGDK…VGMSHNAIRF (75 aa)) is a DNA-binding region (nuclear receptor). 2 NR C4-type zinc fingers span residues 139 to 159 (CRVCGDKASGFHYGVHACEGC) and 176 to 198 (CDLNCRIHKKSRNKCQYCRFQKC). Positions 205–280 (HNAIRFGRMP…DKSPFVIYDM (76 aa)) are interaction with FAM120B. The NR LBD domain maps to 238–503 (DLRALAKHLY…HPLLQEIYKD (266 aa)). Lys252 is covalently cross-linked (Glycyl lysine isopeptide (Lys-Gly) (interchain with G-Cter in ubiquitin)). The 9aaTAD motif lies at 495–503 (PLLQEIYKD).

Belongs to the nuclear hormone receptor family. NR1 subfamily. In terms of assembly, interacts with FOXO1 (acetylated form). Heterodimer with other nuclear receptors, such as RXRA. The heterodimer with the retinoic acid receptor RXRA is called adipocyte-specific transcription factor ARF6. Interacts with NCOA6 coactivator, leading to a strong increase in transcription of target genes. Interacts with coactivator PPARBP, leading to a mild increase in transcription of target genes. Interacts with NOCA7 in a ligand-inducible manner. Interacts with NCOA1 and NCOA2 LXXLL motifs. Interacts with ASXL1, ASXL2, DNTTIP2, FAM120B, MAP2K1/MEK1, NR0B2, PDPK1, PRDM16, PRMT2 and TGFB1I1. Interacts (when activated by agonist) with PPP5C. Interacts with HELZ2 and THRAP3; the interaction stimulates the transcriptional activity of PPARG. Interacts with PER2, the interaction is ligand dependent and blocks PPARG recruitment to target promoters. Interacts with NOCT. Interacts with ACTN4. Interacts (when in the liganded conformation) with GPS2. Interacts with CRY1 and CRY2 in a ligand-dependent manner. In the absence of hormonal ligand, interacts with TACC1. In macrophages, interacts with PAQR3 and STUB1; the interactions promote PPARG poylubiquitination and STUB1-mediated degradation. Post-translationally, O-GlcNAcylation at Thr-84 reduces transcriptional activity in adipocytes. In terms of processing, phosphorylated at basal conditions and dephosphorylated when treated with the ligand. May be dephosphorylated by PPP5C. The phosphorylated form may be inactive and dephosphorylation induces adipogenic activity. Ubiquitinated by E3 ubiquitin-protein ligase complex containing FBXO9; leading to proteasomal degradation. Ubiquitinated at Lys-252 by TRIM55 leading to proteasomal degradation. Ubiquitinated by E3 ubiquitin-protein ligase STUB1/CHIP; leading to proteasomal degradation. In terms of tissue distribution, highest expression in adipose tissue. Lower in liver, heart, kidney, stomach, duodenum and colon.

It localises to the nucleus. It is found in the cytoplasm. Its activity is regulated as follows. PDPK1 activates its transcriptional activity independently of its kinase activity. Its function is as follows. Nuclear receptor that binds peroxisome proliferators such as hypolipidemic drugs and fatty acids. Once activated by a ligand, the nuclear receptor binds to DNA specific PPAR response elements (PPRE) and modulates the transcription of its target genes, such as acyl-CoA oxidase. It therefore controls the peroxisomal beta-oxidation pathway of fatty acids. Key regulator of adipocyte differentiation and glucose homeostasis. ARF6 acts as a key regulator of the tissue-specific adipocyte P2 (aP2) enhancer. Acts as a critical regulator of gut homeostasis by suppressing NF-kappa-B-mediated pro-inflammatory responses. Plays a role in the regulation of cardiovascular circadian rhythms by regulating the transcription of BMAL1 in the blood vessels. The protein is Peroxisome proliferator-activated receptor gamma (PPARG) of Macaca mulatta (Rhesus macaque).